A 148-amino-acid polypeptide reads, in one-letter code: UPF0251 protein Cbei_2962 (148 aa).

It belongs to the UPF0251 family.

This Clostridium beijerinckii (strain ATCC 51743 / NCIMB 8052) (Clostridium acetobutylicum) protein is UPF0251 protein Cbei_2962.